A 488-amino-acid polypeptide reads, in one-letter code: Protein nucleotidyltransferase YdiU (488 aa).

ATP contacts are provided by glycine 91, glycine 93, arginine 94, lysine 114, aspartate 126, glycine 127, arginine 177, and arginine 184. Catalysis depends on aspartate 253, which acts as the Proton acceptor. Residues asparagine 254 and aspartate 263 each coordinate Mg(2+). Aspartate 263 serves as a coordination point for ATP.

This sequence belongs to the SELO family. The cofactor is Mg(2+). Mn(2+) is required as a cofactor.

It carries out the reaction L-seryl-[protein] + ATP = 3-O-(5'-adenylyl)-L-seryl-[protein] + diphosphate. It catalyses the reaction L-threonyl-[protein] + ATP = 3-O-(5'-adenylyl)-L-threonyl-[protein] + diphosphate. The catalysed reaction is L-tyrosyl-[protein] + ATP = O-(5'-adenylyl)-L-tyrosyl-[protein] + diphosphate. The enzyme catalyses L-histidyl-[protein] + UTP = N(tele)-(5'-uridylyl)-L-histidyl-[protein] + diphosphate. It carries out the reaction L-seryl-[protein] + UTP = O-(5'-uridylyl)-L-seryl-[protein] + diphosphate. It catalyses the reaction L-tyrosyl-[protein] + UTP = O-(5'-uridylyl)-L-tyrosyl-[protein] + diphosphate. Nucleotidyltransferase involved in the post-translational modification of proteins. It can catalyze the addition of adenosine monophosphate (AMP) or uridine monophosphate (UMP) to a protein, resulting in modifications known as AMPylation and UMPylation. This chain is Protein nucleotidyltransferase YdiU, found in Bacillus cereus (strain ATCC 10987 / NRS 248).